A 768-amino-acid polypeptide reads, in one-letter code: MHQHMLGPSTSLGGTNNSALQSSVLSEGVLLSHSQPTREEIKKNFETREGVYRSVPSAEFSRPRPLPQYHMPPGIASAAASQIAAAGSTVRVSFLNGAEKSVESPEAVAPTSSTYEHHKNEPNGARIDMVDEAQADKICFNVGKELYVFSYRGTQTETDLSRPIDKRVYKGTSPTYHAFNQESAKNGSCQLLIGFTLGQLQIIDPLEKSSSSPFSRLYNEDRYIEKTSVTCIRWLPGDSNIFLASYVSGNLYVYDQRISAASSNNNGSSQPPPWTIHKEGDKFAIHTWKGKVQRNPVTRWQIGEGSIHQFSFSGSDGKMMATVSHDGFLRIFNYHAQELLAVMKSYFGGLLTLSWSPDAKLIATGGEDDLLTVYSVAEKRVVCRGQAHKSWVSQVKFDPYLCTTEEDLENNGIAMTSTFDDVAKDFSIRSGPVPSTSADLNSGVMNATSTFSRCSLASFNTINGAPAGNSVRYRIGSVGHDTFLCLWDITEDMLNQGNIRRHRNSTIIAPMTTLEVQTNSLVGRLEDLQEVSPGGAGVNASSDSQSITNNHTTPRPEKQKKKKFTKRLGFSKFTSGSSSATSNPVGGHKIGTLMNGASVNSESSKKQNPGLISQISCCNETRMLGSKFCPGIRDVPMIEPLMCKKVSHDRLTVLEFREDCVVTACQEGYICTWGRPGRYQPKRDCINSPGTASPESGQKPSGSTSAMTSSYGYGSDALNGVPPSRSSSTYSNSEQQLRSPNITSPSYRVSAASTSVYHRPTYAWQNAN.

The tract at residues 103–122 (ESPEAVAPTSSTYEHHKNEP) is disordered. WD repeat units lie at residues 224-264 (IEKT…ASSN), 302-342 (IGEG…LLAV), 345-384 (SYFG…VVCR), and 454-497 (CSLA…LNQG). The disordered stretch occupies residues 531-608 (VSPGGAGVNA…VNSESSKKQN (78 aa)). The segment covering 539 to 553 (NASSDSQSITNNHTT) has biased composition (polar residues). The segment covering 570–582 (FSKFTSGSSSATS) has biased composition (low complexity). Residues 595-608 (NGASVNSESSKKQN) are compositionally biased toward polar residues. Residues 646–683 (VSHDRLTVLEFREDCVVTACQEGYICTWGRPGRYQPKR) form a WD 5 repeat. The disordered stretch occupies residues 684-749 (DCINSPGTAS…PNITSPSYRV (66 aa)). Positions 688 to 712 (SPGTASPESGQKPSGSTSAMTSSYG) are enriched in polar residues. Residues 724–733 (SRSSSTYSNS) show a composition bias toward low complexity. Over residues 734–749 (EQQLRSPNITSPSYRV) the composition is skewed to polar residues.

As to quaternary structure, interacts with usp-46; the interaction increases the catalytic activity of usp-46 in the presence of wdr-48. Expressed in several neurons in the head and tail.

Together with wdr-48, binds to and stimulates the activity of the deubiquitinating enzyme usp-46, leading to deubiquitination and stabilization of the glr-1 glutamate receptor. This is WD repeat-containing protein 20 homolog from Caenorhabditis elegans.